Here is a 206-residue protein sequence, read N- to C-terminus: Thiamine-phosphate synthase (206 aa).

4-amino-2-methyl-5-(diphosphooxymethyl)pyrimidine-binding positions include 36-40 (QLRMK) and N68. Residues D69 and D88 each coordinate Mg(2+). S106 provides a ligand contact to 4-amino-2-methyl-5-(diphosphooxymethyl)pyrimidine. 132-134 (TNT) lines the 2-[(2R,5Z)-2-carboxy-4-methylthiazol-5(2H)-ylidene]ethyl phosphate pocket. K135 provides a ligand contact to 4-amino-2-methyl-5-(diphosphooxymethyl)pyrimidine. Residues G162 and 182–183 (VS) contribute to the 2-[(2R,5Z)-2-carboxy-4-methylthiazol-5(2H)-ylidene]ethyl phosphate site.

The protein belongs to the thiamine-phosphate synthase family. It depends on Mg(2+) as a cofactor.

The catalysed reaction is 2-[(2R,5Z)-2-carboxy-4-methylthiazol-5(2H)-ylidene]ethyl phosphate + 4-amino-2-methyl-5-(diphosphooxymethyl)pyrimidine + 2 H(+) = thiamine phosphate + CO2 + diphosphate. The enzyme catalyses 2-(2-carboxy-4-methylthiazol-5-yl)ethyl phosphate + 4-amino-2-methyl-5-(diphosphooxymethyl)pyrimidine + 2 H(+) = thiamine phosphate + CO2 + diphosphate. It carries out the reaction 4-methyl-5-(2-phosphooxyethyl)-thiazole + 4-amino-2-methyl-5-(diphosphooxymethyl)pyrimidine + H(+) = thiamine phosphate + diphosphate. Its pathway is cofactor biosynthesis; thiamine diphosphate biosynthesis; thiamine phosphate from 4-amino-2-methyl-5-diphosphomethylpyrimidine and 4-methyl-5-(2-phosphoethyl)-thiazole: step 1/1. In terms of biological role, condenses 4-methyl-5-(beta-hydroxyethyl)thiazole monophosphate (THZ-P) and 2-methyl-4-amino-5-hydroxymethyl pyrimidine pyrophosphate (HMP-PP) to form thiamine monophosphate (TMP). This Methanococcus vannielii (strain ATCC 35089 / DSM 1224 / JCM 13029 / OCM 148 / SB) protein is Thiamine-phosphate synthase.